The sequence spans 227 residues: YEATS domain-containing protein 4 (227 aa).

A YEATS domain is found at 15–158; the sequence is RVKGVTIVKP…AMMQQLLTTS (144 aa). Lys-37 participates in a covalent cross-link: Glycyl lysine isopeptide (Lys-Gly) (interchain with G-Cter in SUMO2). The tract at residues 93-97 is diacetylated histone H3 binding; that stretch reads WGEFE. The interaction with MLLT10 stretch occupies residues 163–227; the sequence is LGAYKHETEF…LEEDDQAKDI (65 aa). Positions 168-227 are interaction with TACC1; that stretch reads HETEFAELEVKTREKLEAAKKKTSFEIAELKERLKASRETINCLKNEIRKLEEDDQAKDI. Residues 178–226 are a coiled coil; it reads KTREKLEAAKKKTSFEIAELKERLKASRETINCLKNEIRKLEEDDQAKD.

In terms of assembly, component of numerous complexes with chromatin remodeling and histone acetyltransferase activity. Component of the NuA4 histone acetyltransferase complex which contains the catalytic subunit KAT5/TIP60 and the subunits EP400, TRRAP/PAF400, BRD8/SMAP, EPC1, DMAP1/DNMAP1, RUVBL1/TIP49, RUVBL2, ING3, actin, ACTL6A/BAF53A, MORF4L1/MRG15, MORF4L2/MRGX, MRGBP, YEATS4/GAS41, VPS72/YL1 and MEAF6. The NuA4 complex interacts with MYC and the adenovirus E1A protein. Component of a NuA4-related complex which contains EP400, TRRAP/PAF400, SRCAP, BRD8/SMAP, EPC1, DMAP1/DNMAP1, RUVBL1/TIP49, RUVBL2, actin, ACTL6A/BAF53A, VPS72 and YEATS4/GAS41. Interacts with MLLT10/AF10. Also interacts with the SWI/SNF component SMARCB1/BAF47, TACC1 and TACC2, and the nuclear matrix protein NUMA1. As to expression, expressed in brain, heart, kidney, liver, lung, pancreas, placenta and skeletal muscle.

The protein resides in the nucleus. In terms of biological role, chromatin reader component of the NuA4 histone acetyltransferase (HAT) complex, a complex involved in transcriptional activation of select genes principally by acetylation of nucleosomal histones H4 and H2A. Specifically recognizes and binds acylated histone H3, with a preference for histone H3 diacetylated at 'Lys-18' and 'Lys-27' (H3K18ac and H3K27ac) or histone H3 diacetylated at 'Lys-14' and 'Lys-27' (H3K14ac and H3K27ac). Also able to recognize and bind crotonylated histone H3. May also recognize and bind histone H3 succinylated at 'Lys-122' (H3K122succ); additional evidences are however required to confirm this result in vivo. Plays a key role in histone variant H2AZ1/H2A.Z deposition into specific chromatin regions: recognizes and binds H3K14ac and H3K27ac on the promoters of actively transcribed genes and recruits NuA4-related complex to deposit H2AZ1/H2A.Z. H2AZ1/H2A.Z deposition is required for maintenance of embryonic stem cell. In Homo sapiens (Human), this protein is YEATS domain-containing protein 4.